The sequence spans 173 residues: Crossover junction endodeoxyribonuclease RuvC (173 aa).

Active-site residues include Asp8, Glu67, and Asp139. Positions 8, 67, and 139 each coordinate Mg(2+).

Belongs to the RuvC family. As to quaternary structure, homodimer which binds Holliday junction (HJ) DNA. The HJ becomes 2-fold symmetrical on binding to RuvC with unstacked arms; it has a different conformation from HJ DNA in complex with RuvA. In the full resolvosome a probable DNA-RuvA(4)-RuvB(12)-RuvC(2) complex forms which resolves the HJ. Mg(2+) serves as cofactor.

It localises to the cytoplasm. It carries out the reaction Endonucleolytic cleavage at a junction such as a reciprocal single-stranded crossover between two homologous DNA duplexes (Holliday junction).. In terms of biological role, the RuvA-RuvB-RuvC complex processes Holliday junction (HJ) DNA during genetic recombination and DNA repair. Endonuclease that resolves HJ intermediates. Cleaves cruciform DNA by making single-stranded nicks across the HJ at symmetrical positions within the homologous arms, yielding a 5'-phosphate and a 3'-hydroxyl group; requires a central core of homology in the junction. The consensus cleavage sequence is 5'-(A/T)TT(C/G)-3'. Cleavage occurs on the 3'-side of the TT dinucleotide at the point of strand exchange. HJ branch migration catalyzed by RuvA-RuvB allows RuvC to scan DNA until it finds its consensus sequence, where it cleaves and resolves the cruciform DNA. The chain is Crossover junction endodeoxyribonuclease RuvC from Shewanella loihica (strain ATCC BAA-1088 / PV-4).